We begin with the raw amino-acid sequence, 89 residues long: Putative regulatory protein CLL_A1210 (89 aa).

The protein belongs to the RemA family.

This chain is Putative regulatory protein CLL_A1210, found in Clostridium botulinum (strain Eklund 17B / Type B).